Consider the following 416-residue polypeptide: Serine hydroxymethyltransferase (416 aa).

(6S)-5,6,7,8-tetrahydrofolate-binding positions include L117 and 121-123; that span reads GHL. At K225 the chain carries N6-(pyridoxal phosphate)lysine. Position 351 to 353 (351 to 353) interacts with (6S)-5,6,7,8-tetrahydrofolate; the sequence is SPF.

It belongs to the SHMT family. In terms of assembly, homodimer. Requires pyridoxal 5'-phosphate as cofactor.

The protein localises to the cytoplasm. The enzyme catalyses (6R)-5,10-methylene-5,6,7,8-tetrahydrofolate + glycine + H2O = (6S)-5,6,7,8-tetrahydrofolate + L-serine. The protein operates within one-carbon metabolism; tetrahydrofolate interconversion. It participates in amino-acid biosynthesis; glycine biosynthesis; glycine from L-serine: step 1/1. Catalyzes the reversible interconversion of serine and glycine with tetrahydrofolate (THF) serving as the one-carbon carrier. This reaction serves as the major source of one-carbon groups required for the biosynthesis of purines, thymidylate, methionine, and other important biomolecules. Also exhibits THF-independent aldolase activity toward beta-hydroxyamino acids, producing glycine and aldehydes, via a retro-aldol mechanism. The chain is Serine hydroxymethyltransferase from Blochmanniella pennsylvanica (strain BPEN).